The sequence spans 187 residues: Phosphatidylethanolamine-binding protein 1 (187 aa).

Residues S6 and S13 each carry the phosphoserine modification. At T42 the chain carries Phosphothreonine. S52 and S98 each carry phosphoserine. The tract at residues 93 to 134 is interaction with RAF1; sequence KGGNISSGTVLSDYVGSGPPKGTGLHRYVWLVYEQDGPLKCD.

The protein belongs to the phosphatidylethanolamine-binding protein family. As to quaternary structure, has a tendency to form dimers by disulfide cross-linking. Interacts with RAF1 and this interaction is enhanced if RAF1 is phosphorylated on residues 'Ser-338', 'Ser-339', 'Tyr-340' and 'Tyr-341'. Interacts with ALOX15; in response to IL13/interleukin-13, prevents the interaction of PEBP1 with RAF1 to activate the ERK signaling cascade.

It localises to the cytoplasm. Binds ATP, opioids and phosphatidylethanolamine. Has lower affinity for phosphatidylinositol and phosphatidylcholine. Serine protease inhibitor which inhibits thrombin, neuropsin and chymotrypsin but not trypsin, tissue type plasminogen activator and elastase. Inhibits the kinase activity of RAF1 by inhibiting its activation and by dissociating the RAF1/MEK complex and acting as a competitive inhibitor of MEK phosphorylation. Functionally, HCNP may be involved in the function of the presynaptic cholinergic neurons of the central nervous system. HCNP increases the production of choline acetyltransferase but not acetylcholinesterase. Seems to be mediated by a specific receptor. This chain is Phosphatidylethanolamine-binding protein 1 (PEBP1), found in Oryctolagus cuniculus (Rabbit).